A 127-amino-acid chain; its full sequence is Promotilin (127 aa).

Residues 1–25 (MLSRKAVAALLLVHVTAMLASQTEG) form the signal peptide. The tract at residues 41–67 (REQNKRLRKSLRVQQRSKAAGRLEPQE) is disordered.

It belongs to the motilin family. Present in the gut mucosa with the exception of the gastric corpus. Also present in medulla oblongata, nucleus of the solitary tract, hypophysis, spinal cord, hypothalamus, and cerebellum but not in the cerebral cortex.

The protein resides in the secreted. Functionally, plays an important role in the regulation of interdigestive gastrointestinal motility and indirectly causes rhythmic contraction of duodenal and colonic smooth muscle. The protein is Promotilin (MLN) of Cavia porcellus (Guinea pig).